The following is a 1243-amino-acid chain: Serine/threonine-protein kinase WNK4 (1243 aa).

A compositionally biased stretch (polar residues) spans 1–17 (MLASPATETTVLMSQTE). The tract at residues 1–142 (MLASPATETT…GPGSREPLRV (142 aa)) is disordered. Over residues 65–77 (VDLGLLSSWSLPA) the composition is skewed to low complexity. Residues 78-103 (SPAPDPPDPPDSAGPGPARSPPPSSK) are compositionally biased toward pro residues. Position 97 is a phosphoserine (Ser97). A compositionally biased stretch (basic and acidic residues) spans 118 to 127 (AAEDSARPEL). Glycyl lysine isopeptide (Lys-Gly) (interchain with G-Cter in ubiquitin) cross-links involve residues Lys157 and Lys175. The region spanning 174–432 (LKFDIEIGRG…IQDLLAHAFF (259 aa)) is the Protein kinase domain. An ATP-binding site is contributed by Ser184. Residues Lys186, Lys226, and Lys241 each participate in a glycyl lysine isopeptide (Lys-Gly) (interchain with G-Cter in ubiquitin) cross-link. Residues 254–257 (TELM) and Lys304 contribute to the ATP site. Asp321 serves as the catalytic Proton acceptor. Lys328 is covalently cross-linked (Glycyl lysine isopeptide (Lys-Gly) (interchain with G-Cter in ubiquitin)). A phosphoserine; by autocatalysis mark is found at Ser331 and Ser335. Glycyl lysine isopeptide (Lys-Gly) (interchain with G-Cter in ubiquitin) cross-links involve residues Lys387, Lys393, Lys450, and Lys454. Positions 526–564 (KARELEALPPEPGPPPATVPMAPGPPSVFPPEPEEPEAD) are disordered. Residues 534–556 (PPEPGPPPATVPMAPGPPSVFPP) show a composition bias toward pro residues. The interval 557–567 (EPEEPEADQHQ) is interaction with KLHL3. Ser575 is subject to Phosphoserine. Low complexity predominate over residues 630 to 641 (SGPGSDFSPGDS). Disordered regions lie at residues 630–683 (SGPG…SVSD), 751–871 (DTGP…STPE), and 943–1110 (SPSP…SPVW). Positions 663–676 (PPGRNLRRRPRSRL) are enriched in basic residues. Positions 767–780 (EPAPLPALPVPLPD) are enriched in pro residues. The span at 797 to 812 (WTAFSTSSSSPGTPLS) shows a compositional bias: low complexity. A compositionally biased stretch (pro residues) spans 822 to 843 (PISPGPIFPITSPPCHPSPSPF). 3 stretches are compositionally biased toward low complexity: residues 844 to 854 (SPISSQVSSNP), 862 to 871 (PLPFSSSTPE), and 943 to 952 (SPSPGLLSQS). Residues 953 to 970 (PPAPPSPLPSLPLPPPVA) are compositionally biased toward pro residues. Residue Lys1010 forms a Glycyl lysine isopeptide (Lys-Gly) (interchain with G-Cter in ubiquitin) linkage. The short motif at 1016-1019 (RFQV) is the RFXV motif element. Residue Ser1035 is modified to Phosphoserine. A compositionally biased stretch (basic and acidic residues) spans 1065–1077 (ETREALAESDRAA). Glycyl lysine isopeptide (Lys-Gly) (interchain with G-Cter in ubiquitin) cross-links involve residues Lys1144, Lys1157, and Lys1158. A disordered region spans residues 1166–1243 (RLGKQPPPGI…VTFAGDVGRM (78 aa)). 2 stretches are compositionally biased toward polar residues: residues 1193 to 1204 (SFPTSRRNSLQR) and 1216 to 1228 (NSLS…SQEQ). At Ser1217 the chain carries Phosphoserine.

Belongs to the protein kinase superfamily. Ser/Thr protein kinase family. WNK subfamily. In terms of assembly, interacts with the C-terminal region of KCNJ1. Mg(2+) is required as a cofactor. In terms of processing, autophosphorylated at Ser-331 and Ser-335, promoting its activation. Phosphorylated by WNK1 and WNK3. Phosphorylated at Ser-575 in a MAP3K15/ASK3-dependent process in response to osmotic stress or hypotonic low-chloride stimulation. Ubiquitinated by the BCR(KLHL3) complex, leading to its degradation. Also ubiquitinated by the BCR(KLHL2) complex. As to expression, expressed in kidney, colon and skin.

It localises to the cell junction. The protein localises to the tight junction. It catalyses the reaction L-seryl-[protein] + ATP = O-phospho-L-seryl-[protein] + ADP + H(+). The catalysed reaction is L-threonyl-[protein] + ATP = O-phospho-L-threonyl-[protein] + ADP + H(+). With respect to regulation, activation requires autophosphorylation of Ser-331 and Ser-335. Autophosphorylation and subsequent activation is inhibited by increases in intracellular ionic strength: Cl(-) potently inhibits WNK4 kinase activity via direct binding. Also inhibited by K(+) ions. Its function is as follows. Serine/threonine-protein kinase component of the WNK4-SPAK/OSR1 kinase cascade, which acts as a key regulator of ion transport in the distal nephron and blood pressure. The WNK4-SPAK/OSR1 kinase cascade is composed of WNK4, which mediates phosphorylation and activation of downstream kinases OXSR1/OSR1 and STK39/SPAK. Following activation, OXSR1/OSR1 and STK39/SPAK catalyze phosphorylation of ion cotransporters, such as SLC12A1/NKCC2, SLC12A2/NKCC1, SLC12A3/NCC, SLC12A5/KCC2 or SLC12A6/KCC3, regulating their activity. Acts as a molecular switch that regulates the balance between renal salt reabsorption and K(+) secretion by modulating the activities of renal transporters and channels, including the Na-Cl cotransporter SLC12A3/NCC and the K(+) channel, KCNJ1/ROMK. Regulates NaCl reabsorption in the distal nephron by activating the thiazide-sensitive Na-Cl cotransporter SLC12A3/NCC in distal convoluted tubule cells of kidney: activates SLC12A3/NCC in a OXSR1/OSR1- and STK39/SPAK-dependent process. Also acts as a scaffold protein independently of its protein kinase activity: negatively regulates cell membrane localization of various transporters and channels (CFTR, KCNJ1/ROMK, SLC4A4, SLC26A9 and TRPV4) by clathrin-dependent endocytosis. Also inhibits the activity of the epithelial Na(+) channel (ENaC) SCNN1A, SCNN1B, SCNN1D in a inase-independent mechanism. May also phosphorylate NEDD4L. The polypeptide is Serine/threonine-protein kinase WNK4 (Homo sapiens (Human)).